Consider the following 64-residue polypeptide: Large ribosomal subunit protein bL35 (64 aa).

Composition is skewed to basic residues over residues 1–15 and 23–42; these read MPKAKTHSGASKRFR and VRQKANRRHLLEHKPTKRTR. A disordered region spans residues 1-45; that stretch reads MPKAKTHSGASKRFRTTGSGKVVRQKANRRHLLEHKPTKRTRRLD.

This sequence belongs to the bacterial ribosomal protein bL35 family.

In Mycolicibacterium vanbaalenii (strain DSM 7251 / JCM 13017 / BCRC 16820 / KCTC 9966 / NRRL B-24157 / PYR-1) (Mycobacterium vanbaalenii), this protein is Large ribosomal subunit protein bL35.